A 58-amino-acid chain; its full sequence is Putative antitoxin VapB16 (58 aa).

In terms of biological role, putative antitoxin component of a possible type II toxin-antitoxin (TA) system. The cognate toxin is VapC16. The protein is Putative antitoxin VapB16 (vapB16) of Mycobacterium tuberculosis (strain ATCC 25618 / H37Rv).